The sequence spans 383 residues: Putative glutamate--cysteine ligase 2-1 (383 aa).

It belongs to the glutamate--cysteine ligase type 2 family. YbdK subfamily.

The enzyme catalyses L-cysteine + L-glutamate + ATP = gamma-L-glutamyl-L-cysteine + ADP + phosphate + H(+). Functionally, ATP-dependent carboxylate-amine ligase which exhibits weak glutamate--cysteine ligase activity. This chain is Putative glutamate--cysteine ligase 2-1, found in Legionella pneumophila (strain Corby).